Reading from the N-terminus, the 177-residue chain is Probable chemoreceptor glutamine deamidase CheD (177 aa).

It belongs to the CheD family.

The enzyme catalyses L-glutaminyl-[protein] + H2O = L-glutamyl-[protein] + NH4(+). Probably deamidates glutamine residues to glutamate on methyl-accepting chemotaxis receptors (MCPs), playing an important role in chemotaxis. The polypeptide is Probable chemoreceptor glutamine deamidase CheD (Pseudomonas syringae pv. syringae (strain B728a)).